The chain runs to 151 residues: S-ribosylhomocysteine lyase (151 aa).

Fe cation contacts are provided by histidine 54, histidine 58, and cysteine 121.

This sequence belongs to the LuxS family. In terms of assembly, homodimer. It depends on Fe cation as a cofactor.

The catalysed reaction is S-(5-deoxy-D-ribos-5-yl)-L-homocysteine = (S)-4,5-dihydroxypentane-2,3-dione + L-homocysteine. Its function is as follows. Involved in the synthesis of autoinducer 2 (AI-2) which is secreted by bacteria and is used to communicate both the cell density and the metabolic potential of the environment. The regulation of gene expression in response to changes in cell density is called quorum sensing. Catalyzes the transformation of S-ribosylhomocysteine (RHC) to homocysteine (HC) and 4,5-dihydroxy-2,3-pentadione (DPD). The polypeptide is S-ribosylhomocysteine lyase (Clostridioides difficile (strain 630) (Peptoclostridium difficile)).